We begin with the raw amino-acid sequence, 248 residues long: MIYLKSANEVAGIKKACAIFKAVKAYFTIEKLLGKKLVTIDRLIKQFIEQKQAKCAFHGYLGFPGFNCLSLNQTVIHGVADQTVFKDSDKLTLDIGIDYHGYLCDAAFTLLGNKADPKAVKLLNDVEQAFSKVIEPELFVNNPIGNLSNAIQTYFENKGYFLVKEFGGHGCGIKIHEDPLILNWGEKNQGVRLQEGMVICIEPMVMTDSSEITMAANNWNVLTLKSKFNCHVEQMYHITNNGFECLTN.

His77 contributes to the substrate binding site. 3 residues coordinate a divalent metal cation: Asp94, Asp105, and His169. His176 contributes to the substrate binding site. 2 residues coordinate a divalent metal cation: Glu202 and Glu233.

This sequence belongs to the peptidase M24A family. Methionine aminopeptidase type 1 subfamily. In terms of assembly, monomer. The cofactor is Co(2+). Zn(2+) is required as a cofactor. It depends on Mn(2+) as a cofactor. Fe(2+) serves as cofactor.

The enzyme catalyses Release of N-terminal amino acids, preferentially methionine, from peptides and arylamides.. In terms of biological role, removes the N-terminal methionine from nascent proteins. The N-terminal methionine is often cleaved when the second residue in the primary sequence is small and uncharged (Met-Ala-, Cys, Gly, Pro, Ser, Thr, or Val). Requires deformylation of the N(alpha)-formylated initiator methionine before it can be hydrolyzed. The protein is Methionine aminopeptidase of Mycoplasma genitalium (strain ATCC 33530 / DSM 19775 / NCTC 10195 / G37) (Mycoplasmoides genitalium).